The sequence spans 460 residues: Dynactin subunit 4 (460 aa).

Alanine 2 bears the N-acetylalanine mark. Positions 152 to 172 (QQLAQKEKVERDRKKLARRRN) form a coiled coil. The residue at position 196 (serine 196) is a Phosphoserine. Lysine 215 is covalently cross-linked (Glycyl lysine isopeptide (Lys-Gly) (interchain with G-Cter in SUMO2)). At threonine 407 the chain carries Phosphothreonine.

This sequence belongs to the dynactin subunit 4 family. In terms of assembly, subunit of dynactin, a multiprotein complex part of a tripartite complex with dynein and a adapter, such as BICDL1, BICD2 or HOOK3. The dynactin complex is built around ACTR1A/ACTB filament and consists of an actin-related filament composed of a shoulder domain, a pointed end and a barbed end. Its length is defined by its flexible shoulder domain. The soulder is composed of 2 DCTN1 subunits, 4 DCTN2 and 2 DCTN3. The 4 DCNT2 (via N-terminus) bind the ACTR1A filament and act as molecular rulers to determine the length. The pointed end is important for binding dynein-dynactin cargo adapters. Consists of 4 subunits: ACTR10, DCNT4, DCTN5 and DCTN6. The barbed end is composed of a CAPZA1:CAPZB heterodimers, which binds ACTR1A/ACTB filament and dynactin and stabilizes dynactin. Interacts with ATP7B, but not ATP7A, in a copper-dependent manner. Interacts with ANK2; this interaction is required for localization at costameres. Interacts with N4BP2L1.

The protein resides in the cytoplasm. Its subcellular location is the cytoskeleton. The protein localises to the microtubule organizing center. It localises to the centrosome. It is found in the stress fiber. The protein resides in the cell cortex. Its subcellular location is the myofibril. The protein localises to the sarcomere. Its function is as follows. Part of the dynactin complex that activates the molecular motor dynein for ultra-processive transport along microtubules. The sequence is that of Dynactin subunit 4 from Homo sapiens (Human).